The chain runs to 300 residues: Peptidyl-prolyl cis-trans isomerase E (300 aa).

The 79-residue stretch at 6–84 folds into the RRM domain; that stretch reads RTIYVGGLAD…RTIRVNLAKP (79 aa). The region spanning 142-298 is the PPIase cyclophilin-type domain; the sequence is FFDIRIGGND…QKIVIYSCGE (157 aa).

It belongs to the cyclophilin-type PPIase family. PPIase E subfamily.

It is found in the nucleus. The enzyme catalyses [protein]-peptidylproline (omega=180) = [protein]-peptidylproline (omega=0). PPIases accelerate the folding of proteins. It catalyzes the cis-trans isomerization of proline imidic peptide bonds in oligopeptides. Combines RNA-binding and PPIase activities. In Drosophila melanogaster (Fruit fly), this protein is Peptidyl-prolyl cis-trans isomerase E (cyp33).